The following is a 461-amino-acid chain: Ribosomal protein uS12 methylthiotransferase RimO (461 aa).

The region spanning 9–124 is the MTTase N-terminal domain; it reads PRIGMVSLGC…VMDAVHLNLP (116 aa). Residues Cys18, Cys54, Cys83, Cys159, Cys163, and Cys166 each contribute to the [4Fe-4S] cluster site. One can recognise a Radical SAM core domain in the interval 145-387; it reads LTPRHYAYLK…AVAEAVSSQK (243 aa). In terms of domain architecture, TRAM spans 389–461; the sequence is QQRVGATMQV…QGHDLIAVPV (73 aa).

Belongs to the methylthiotransferase family. RimO subfamily. It depends on [4Fe-4S] cluster as a cofactor.

It localises to the cytoplasm. It catalyses the reaction L-aspartate(89)-[ribosomal protein uS12]-hydrogen + (sulfur carrier)-SH + AH2 + 2 S-adenosyl-L-methionine = 3-methylsulfanyl-L-aspartate(89)-[ribosomal protein uS12]-hydrogen + (sulfur carrier)-H + 5'-deoxyadenosine + L-methionine + A + S-adenosyl-L-homocysteine + 2 H(+). In terms of biological role, catalyzes the methylthiolation of an aspartic acid residue of ribosomal protein uS12. This Polaromonas naphthalenivorans (strain CJ2) protein is Ribosomal protein uS12 methylthiotransferase RimO.